The chain runs to 433 residues: Xylose isomerase (433 aa).

Catalysis depends on residues His99 and Asp102. Residues Glu230, Glu266, His269, Asp294, Asp305, Asp307, and Asp337 each contribute to the Mg(2+) site.

It belongs to the xylose isomerase family. In terms of assembly, homotetramer. Mg(2+) is required as a cofactor.

It is found in the cytoplasm. It carries out the reaction alpha-D-xylose = alpha-D-xylulofuranose. This is Xylose isomerase from Cereibacter sphaeroides (strain ATCC 17023 / DSM 158 / JCM 6121 / CCUG 31486 / LMG 2827 / NBRC 12203 / NCIMB 8253 / ATH 2.4.1.) (Rhodobacter sphaeroides).